Reading from the N-terminus, the 158-residue chain is Inner membrane assembly complex subunit 17 (158 aa).

The transit peptide at 1–15 (MFRPLVKRVVTRRFL) directs the protein to the mitochondrion. At 16–85 (AAANNSNAHI…KTQETSLKKF (70 aa)) the chain is on the mitochondrial matrix side. Residues 86–108 (VRPAWIFLLMGSIVYLSCHYVWW) form a helical membrane-spanning segment. Topologically, residues 109-158 (KLDYEEKELEYTHKVHQLESELAALNEAHNSSVSSDKNSKRSSRKWYKFW) are mitochondrial intermembrane. Residues 110 to 140 (LDYEEKELEYTHKVHQLESELAALNEAHNSS) are a coiled coil.

This sequence belongs to the INA17 family. As to quaternary structure, component of the inner membrane assembly (INA) complex, composed of INA17 and INA22. Interacts with a subset of F(1)F(0)-ATP synthase subunits of the F(1)-domain and the peripheral stalk.

The protein localises to the mitochondrion inner membrane. Component of the INA complex (INAC) that promotes the biogenesis of mitochondrial F(1)F(0)-ATP synthase. INAC facilitates the assembly of the peripheral stalk and promotes the assembly of the catalytic F(1)-domain with the membrane-embedded F(0)-domain. The protein is Inner membrane assembly complex subunit 17 of Kluyveromyces lactis (strain ATCC 8585 / CBS 2359 / DSM 70799 / NBRC 1267 / NRRL Y-1140 / WM37) (Yeast).